Consider the following 42-residue polypeptide: Mating-type M-specific polypeptide Mi (42 aa).

It localises to the cytoplasm. It is found in the nucleus. Its function is as follows. Mating type proteins are sequence specific DNA-binding proteins that act as master switches in yeast differentiation by controlling gene expression in a cell type-specific fashion. Required for meiosis, but plays no role in conjugation. This chain is Mating-type M-specific polypeptide Mi (mat1-Mi), found in Schizosaccharomyces pombe (strain 972 / ATCC 24843) (Fission yeast).